The primary structure comprises 337 residues: Mating-type protein MAT-2 (337 aa).

The segment at residues 125-193 (APRPMNCWII…EHLRQHPNYK (69 aa)) is a DNA-binding region (HMG box). A disordered region spans residues 171 to 219 (KRPWQDAAQSAKEEHLRQHPNYKYTPRKPGEKKKRQSRKSKRAAATTTA). Positions 200–212 (GEKKKRQSRKSKR) are enriched in basic residues.

It is found in the nucleus. This Cochliobolus sativus (Common root rot and spot blotch fungus) protein is Mating-type protein MAT-2 (MAT2).